We begin with the raw amino-acid sequence, 727 residues long: Calpain-like protease 1 (727 aa).

A Calpain catalytic domain is found at 70–317 (SRFYPPIPIS…FKQLYLNWNQ (248 aa)). Active-site residues include Cys-128, His-271, and Asn-296.

Belongs to the peptidase C2 family. PalB/RIM13 subfamily. In terms of assembly, interacts with SNF7, which may act together with RIM20 as a scaffold to recruit RIM13 to its substrate RIM101.

Required for the proteolytic cleavage of the transcriptional repressor RIM101 in response to alkaline ambient pH, which is necessary for sporulation and invasive growth. Probably the protease that cleaves RIM101. In Saccharomyces cerevisiae (strain ATCC 204508 / S288c) (Baker's yeast), this protein is Calpain-like protease 1 (RIM13).